A 953-amino-acid polypeptide reads, in one-letter code: Isoleucine--tRNA ligase (953 aa).

The short motif at 57 to 67 (PYANGDIHIGH) is the 'HIGH' region element. E582 provides a ligand contact to L-isoleucyl-5'-AMP. Positions 623–627 (KMSKS) match the 'KMSKS' region motif. K626 is an ATP binding site. Zn(2+) contacts are provided by C916, C919, C936, and C939.

The protein belongs to the class-I aminoacyl-tRNA synthetase family. IleS type 1 subfamily. Monomer. It depends on Zn(2+) as a cofactor.

The protein resides in the cytoplasm. The catalysed reaction is tRNA(Ile) + L-isoleucine + ATP = L-isoleucyl-tRNA(Ile) + AMP + diphosphate. Functionally, catalyzes the attachment of isoleucine to tRNA(Ile). As IleRS can inadvertently accommodate and process structurally similar amino acids such as valine, to avoid such errors it has two additional distinct tRNA(Ile)-dependent editing activities. One activity is designated as 'pretransfer' editing and involves the hydrolysis of activated Val-AMP. The other activity is designated 'posttransfer' editing and involves deacylation of mischarged Val-tRNA(Ile). In Bordetella avium (strain 197N), this protein is Isoleucine--tRNA ligase.